The chain runs to 343 residues: Holliday junction branch migration complex subunit RuvB (343 aa).

Residues 1–182 (MTDPIPLHTP…FGIPVRLNFY (182 aa)) form a large ATPase domain (RuvB-L) region. Positions 21, 22, 63, 66, 67, 68, 172, 182, and 219 each coordinate ATP. Thr67 lines the Mg(2+) pocket. Residues 183–253 (TEEELEKVVT…IADAALTRLE (71 aa)) form a small ATPAse domain (RuvB-S) region. The segment at 256 to 343 (GLGLDAMDRR…SQTGLFDGKS (88 aa)) is head domain (RuvB-H). The DNA site is built by Arg292, Arg311, and Arg316.

Belongs to the RuvB family. As to quaternary structure, homohexamer. Forms an RuvA(8)-RuvB(12)-Holliday junction (HJ) complex. HJ DNA is sandwiched between 2 RuvA tetramers; dsDNA enters through RuvA and exits via RuvB. An RuvB hexamer assembles on each DNA strand where it exits the tetramer. Each RuvB hexamer is contacted by two RuvA subunits (via domain III) on 2 adjacent RuvB subunits; this complex drives branch migration. In the full resolvosome a probable DNA-RuvA(4)-RuvB(12)-RuvC(2) complex forms which resolves the HJ.

Its subcellular location is the cytoplasm. It carries out the reaction ATP + H2O = ADP + phosphate + H(+). Its function is as follows. The RuvA-RuvB-RuvC complex processes Holliday junction (HJ) DNA during genetic recombination and DNA repair, while the RuvA-RuvB complex plays an important role in the rescue of blocked DNA replication forks via replication fork reversal (RFR). RuvA specifically binds to HJ cruciform DNA, conferring on it an open structure. The RuvB hexamer acts as an ATP-dependent pump, pulling dsDNA into and through the RuvAB complex. RuvB forms 2 homohexamers on either side of HJ DNA bound by 1 or 2 RuvA tetramers; 4 subunits per hexamer contact DNA at a time. Coordinated motions by a converter formed by DNA-disengaged RuvB subunits stimulates ATP hydrolysis and nucleotide exchange. Immobilization of the converter enables RuvB to convert the ATP-contained energy into a lever motion, pulling 2 nucleotides of DNA out of the RuvA tetramer per ATP hydrolyzed, thus driving DNA branch migration. The RuvB motors rotate together with the DNA substrate, which together with the progressing nucleotide cycle form the mechanistic basis for DNA recombination by continuous HJ branch migration. Branch migration allows RuvC to scan DNA until it finds its consensus sequence, where it cleaves and resolves cruciform DNA. The protein is Holliday junction branch migration complex subunit RuvB of Erythrobacter litoralis (strain HTCC2594).